A 1196-amino-acid chain; its full sequence is Cingulin (1196 aa).

The head stretch occupies residues 7–354; the sequence is MAEPRGPVDH…LVMTSGSAKG (348 aa). The short motif at 48–62 is the ZIM element; it reads ANTYGVAVRVQGIAG. The interval 54-67 is interaction with TJP1/ZO1; the sequence is AVRVQGIAGQPFVV. The segment at 82 to 105 is disordered; it reads IKGTNNRGPPGALSSDSELPESTY. Serine 95, serine 96, serine 98, serine 135, serine 137, serine 140, serine 155, serine 165, and serine 214 each carry phosphoserine. Residues 95–105 are compositionally biased toward polar residues; the sequence is SSDSELPESTY. The disordered stretch occupies residues 183–263; sequence NKFDSRQGGQ…NQGPLGGFSC (81 aa). Over residues 218-231 the composition is skewed to basic and acidic residues; sequence RLPRDTLDEREHQF. Polar residues predominate over residues 245 to 256; the sequence is MGNSKQSSQNQG. At serine 274 the chain carries Phosphoserine. Residues 355-1150 adopt a coiled-coil conformation; that stretch reads LTGQSELSQK…ARIKTLEKDS (796 aa). Residue lysine 576 is modified to N6-acetyllysine. Residues 884 to 897 are compositionally biased toward basic and acidic residues; the sequence is AQRQAKEWATEAEK. 3 disordered regions span residues 884-906, 1023-1061, and 1149-1174; these read AQRQ…SRLQ, DLKS…EERE, and DSWR…EEFD. Residues 1038–1050 are compositionally biased toward low complexity; it reads SASLSQLESQNQE. Positions 1051–1061 are enriched in basic and acidic residues; that stretch reads LQERLQAEERE. The tail stretch occupies residues 1155–1196; that stretch reads SRSAAESAQREGLSSDEEFDSVYDPSSIASLLTESNLQTSSC. 3 positions are modified to phosphoserine: serine 1168, serine 1169, and serine 1175.

This sequence belongs to the cingulin family. In terms of assembly, homodimer. Interacts with TJP1/ZO1 and SPEF1.

It localises to the cell junction. The protein resides in the tight junction. Its function is as follows. Probably plays a role in the formation and regulation of the tight junction (TJ) paracellular permeability barrier. The polypeptide is Cingulin (Canis lupus familiaris (Dog)).